The chain runs to 154 residues: Large ribosomal subunit protein uL22c (154 aa).

Belongs to the universal ribosomal protein uL22 family. In terms of assembly, part of the 50S ribosomal subunit.

Its subcellular location is the plastid. The protein resides in the chloroplast. Functionally, this protein binds specifically to 23S rRNA. The globular domain of the protein is located near the polypeptide exit tunnel on the outside of the subunit, while an extended beta-hairpin is found that lines the wall of the exit tunnel in the center of the 70S ribosome. In Guizotia abyssinica (Niger), this protein is Large ribosomal subunit protein uL22c (rpl22).